The following is a 353-amino-acid chain: DNA polymerase IV (353 aa).

In terms of domain architecture, UmuC spans 4-185 (IIHVDMDCFF…LPLSKIPGVG (182 aa)). Asp8 and Asp103 together coordinate Mg(2+). Glu104 is an active-site residue.

It belongs to the DNA polymerase type-Y family. Monomer. Mg(2+) serves as cofactor.

The protein localises to the cytoplasm. It catalyses the reaction DNA(n) + a 2'-deoxyribonucleoside 5'-triphosphate = DNA(n+1) + diphosphate. In terms of biological role, poorly processive, error-prone DNA polymerase involved in untargeted mutagenesis. Copies undamaged DNA at stalled replication forks, which arise in vivo from mismatched or misaligned primer ends. These misaligned primers can be extended by PolIV. Exhibits no 3'-5' exonuclease (proofreading) activity. May be involved in translesional synthesis, in conjunction with the beta clamp from PolIII. This is DNA polymerase IV from Serratia proteamaculans (strain 568).